The following is a 119-amino-acid chain: Large ribosomal subunit protein bL20 (119 aa).

It belongs to the bacterial ribosomal protein bL20 family.

Functionally, binds directly to 23S ribosomal RNA and is necessary for the in vitro assembly process of the 50S ribosomal subunit. It is not involved in the protein synthesizing functions of that subunit. The chain is Large ribosomal subunit protein bL20 from Streptococcus suis (strain 98HAH33).